The primary structure comprises 511 residues: Cytochrome P450 4B1 (511 aa).

Residue Glu315 participates in heme binding. Residue Ser436 is modified to Phosphoserine. Residue Cys453 participates in heme binding.

Belongs to the cytochrome P450 family. Heme is required as a cofactor. Detected in the liver and lung (at protein level).

It is found in the endoplasmic reticulum membrane. The protein resides in the microsome membrane. It catalyses the reaction an organic molecule + reduced [NADPH--hemoprotein reductase] + O2 = an alcohol + oxidized [NADPH--hemoprotein reductase] + H2O + H(+). In terms of biological role, cytochromes P450 are a group of heme-thiolate monooxygenases. In liver microsomes, this enzyme is involved in an NADPH-dependent electron transport pathway. It oxidizes a variety of structurally unrelated compounds, including steroids, fatty acids, and xenobiotics. The chain is Cytochrome P450 4B1 (CYP4B1) from Homo sapiens (Human).